A 172-amino-acid polypeptide reads, in one-letter code: Ubiquitin-conjugating enzyme E2 PEX4 (172 aa).

A UBC core domain is found at 14-167; that stretch reads SASKRLIKEL…VELWCQDSDS (154 aa). Cysteine 104 acts as the Glycyl thioester intermediate in catalysis.

Belongs to the ubiquitin-conjugating enzyme family.

The enzyme catalyses S-ubiquitinyl-[E1 ubiquitin-activating enzyme]-L-cysteine + [E2 ubiquitin-conjugating enzyme]-L-cysteine = [E1 ubiquitin-activating enzyme]-L-cysteine + S-ubiquitinyl-[E2 ubiquitin-conjugating enzyme]-L-cysteine.. It participates in protein modification; protein ubiquitination. In terms of biological role, ubiquitin-conjugating enzyme E2 that is essential for peroxisome biogenesis and plays a key role in development, pathogenicity, and cell wall integrity. Required for long and very long-chain fatty acid utilization and is involved in lipid droplet accumulation and the elimination of reactive oxygen species. Controls the expression of proteins involved in protein biosynthesis, fatty acid metabolism, cell wall synthesis, oxidation-reduction reactions, as well as of the enzymes involved in the biosynthesis of the mycotoxin deoxynivalenol (DON), including TRI5, TRI6, and TRI10. The polypeptide is Ubiquitin-conjugating enzyme E2 PEX4 (Gibberella zeae (strain ATCC MYA-4620 / CBS 123657 / FGSC 9075 / NRRL 31084 / PH-1) (Wheat head blight fungus)).